Here is a 117-residue protein sequence, read N- to C-terminus: MMIEVLKSKIHCARVTEANLNYMGSITIDENLLDAANMIAGEKVYIADNNNGERFETYIIKGERGSGKICLNGAAARKVQPDDIVIIMSYALMDFEEAKSFKPTVIFPDPATNSVVK.

Ser25 (schiff-base intermediate with substrate; via pyruvic acid) is an active-site residue. Ser25 is modified (pyruvic acid (Ser)). Thr57 serves as a coordination point for substrate. The active-site Proton donor is Tyr58. 73-75 (GAA) is a binding site for substrate.

The protein belongs to the PanD family. In terms of assembly, heterooctamer of four alpha and four beta subunits. Pyruvate is required as a cofactor. Post-translationally, is synthesized initially as an inactive proenzyme, which is activated by self-cleavage at a specific serine bond to produce a beta-subunit with a hydroxyl group at its C-terminus and an alpha-subunit with a pyruvoyl group at its N-terminus.

It is found in the cytoplasm. The enzyme catalyses L-aspartate + H(+) = beta-alanine + CO2. It participates in cofactor biosynthesis; (R)-pantothenate biosynthesis; beta-alanine from L-aspartate: step 1/1. Functionally, catalyzes the pyruvoyl-dependent decarboxylation of aspartate to produce beta-alanine. This Bacteroides fragilis (strain ATCC 25285 / DSM 2151 / CCUG 4856 / JCM 11019 / LMG 10263 / NCTC 9343 / Onslow / VPI 2553 / EN-2) protein is Aspartate 1-decarboxylase.